Here is a 305-residue protein sequence, read N- to C-terminus: tRNA pseudouridine synthase B (305 aa).

Aspartate 39 serves as the catalytic Nucleophile.

The protein belongs to the pseudouridine synthase TruB family. Type 1 subfamily.

The enzyme catalyses uridine(55) in tRNA = pseudouridine(55) in tRNA. Its function is as follows. Responsible for synthesis of pseudouridine from uracil-55 in the psi GC loop of transfer RNAs. The sequence is that of tRNA pseudouridine synthase B from Staphylococcus aureus (strain Mu50 / ATCC 700699).